The chain runs to 218 residues: MSIAVLRFPGTNCEFDMLHSFKLLGVESHLVWHQEKELPKGTHLVVIPGGFSYGDYLRSGAIARFSPIMQAVIRYAKEGGKVLGICNGFQILVESGLLPGALRRNENLHFVSKFQKLAVVSNNNPFLREYAVSETLNIPIAHADGNYFIDAKGLEELKENDQILLTYQGENPNGSIESIAGVCNKEKSVFGLMPHPERAMEPLLGSVDGARMLRGLAC.

The region spanning 2–218 (SIAVLRFPGT…GARMLRGLAC (217 aa)) is the Glutamine amidotransferase type-1 domain. Cysteine 86 functions as the Nucleophile in the catalytic mechanism. Active-site residues include histidine 195 and glutamate 197.

In terms of assembly, part of the FGAM synthase complex composed of 1 PurL, 1 PurQ and 2 PurS subunits.

It localises to the cytoplasm. The catalysed reaction is N(2)-formyl-N(1)-(5-phospho-beta-D-ribosyl)glycinamide + L-glutamine + ATP + H2O = 2-formamido-N(1)-(5-O-phospho-beta-D-ribosyl)acetamidine + L-glutamate + ADP + phosphate + H(+). The enzyme catalyses L-glutamine + H2O = L-glutamate + NH4(+). It participates in purine metabolism; IMP biosynthesis via de novo pathway; 5-amino-1-(5-phospho-D-ribosyl)imidazole from N(2)-formyl-N(1)-(5-phospho-D-ribosyl)glycinamide: step 1/2. Part of the phosphoribosylformylglycinamidine synthase complex involved in the purines biosynthetic pathway. Catalyzes the ATP-dependent conversion of formylglycinamide ribonucleotide (FGAR) and glutamine to yield formylglycinamidine ribonucleotide (FGAM) and glutamate. The FGAM synthase complex is composed of three subunits. PurQ produces an ammonia molecule by converting glutamine to glutamate. PurL transfers the ammonia molecule to FGAR to form FGAM in an ATP-dependent manner. PurS interacts with PurQ and PurL and is thought to assist in the transfer of the ammonia molecule from PurQ to PurL. This Wolinella succinogenes (strain ATCC 29543 / DSM 1740 / CCUG 13145 / JCM 31913 / LMG 7466 / NCTC 11488 / FDC 602W) (Vibrio succinogenes) protein is Phosphoribosylformylglycinamidine synthase subunit PurQ.